Consider the following 237-residue polypeptide: NADH-ubiquinone oxidoreductase assembly factor N7BML (237 aa).

The span at 214–223 (VEKERDDSGK) shows a compositional bias: basic and acidic residues. A disordered region spans residues 214–237 (VEKERDDSGKPAEWTPKAAVRRRG).

This sequence belongs to the complex I NDUFA12 subunit family.

The protein localises to the mitochondrion. Functionally, acts as an assembly factor of mitochondrial complex I. In Yarrowia lipolytica (strain CLIB 122 / E 150) (Yeast), this protein is NADH-ubiquinone oxidoreductase assembly factor N7BML.